We begin with the raw amino-acid sequence, 61 residues long: MAKKSMIAKQKRTQKYKVREYTRCERCGRPHSVMRKFKLCRICFRELAYKGQIPGVKKASW.

The Zn(2+) site is built by cysteine 24, cysteine 27, cysteine 40, and cysteine 43.

The protein belongs to the universal ribosomal protein uS14 family. Zinc-binding uS14 subfamily. In terms of assembly, part of the 30S ribosomal subunit. Contacts proteins S3 and S10. The cofactor is Zn(2+).

Its function is as follows. Binds 16S rRNA, required for the assembly of 30S particles and may also be responsible for determining the conformation of the 16S rRNA at the A site. This chain is Small ribosomal subunit protein uS14, found in Halalkalibacterium halodurans (strain ATCC BAA-125 / DSM 18197 / FERM 7344 / JCM 9153 / C-125) (Bacillus halodurans).